An 84-amino-acid polypeptide reads, in one-letter code: Molybdopterin synthase sulfur carrier subunit (84 aa).

Gly-84 carries the post-translational modification 1-thioglycine; alternate. Position 84 is a glycyl adenylate; alternate (Gly-84).

The protein belongs to the MoaD family. MOCS2A subfamily. Heterotetramer; composed of 2 small (MOCS2A) and 2 large (MOCS2B) subunits. In terms of processing, C-terminal thiocarboxylation occurs in 2 steps, it is first acyl-adenylated (-COAMP) via the hesA/moeB/thiF part of MOCS3, then thiocarboxylated (-COSH) via the rhodanese domain of MOCS3.

The protein resides in the cytoplasm. Its pathway is cofactor biosynthesis; molybdopterin biosynthesis. In terms of biological role, acts as a sulfur carrier required for molybdopterin biosynthesis. Component of the molybdopterin synthase complex that catalyzes the conversion of precursor Z into molybdopterin by mediating the incorporation of 2 sulfur atoms into precursor Z to generate a dithiolene group. In the complex, serves as sulfur donor by being thiocarboxylated (-COSH) at its C-terminus by MOCS3. After interaction with MOCS2B, the sulfur is then transferred to precursor Z to form molybdopterin. This chain is Molybdopterin synthase sulfur carrier subunit, found in Caenorhabditis elegans.